Reading from the N-terminus, the 102-residue chain is uncharacterized protein (102 aa).

This is an uncharacterized protein from Ictaluridae (bullhead catfishes).